A 592-amino-acid chain; its full sequence is 1,4-alpha-glucan branching enzyme GlgB 2 (592 aa).

Asp274 (nucleophile) is an active-site residue. Catalysis depends on Glu327, which acts as the Proton donor.

The protein belongs to the glycosyl hydrolase 13 family. GlgB subfamily. In terms of assembly, monomer.

The enzyme catalyses Transfers a segment of a (1-&gt;4)-alpha-D-glucan chain to a primary hydroxy group in a similar glucan chain.. It functions in the pathway glycan biosynthesis; glycogen biosynthesis. Catalyzes the formation of the alpha-1,6-glucosidic linkages in glycogen by scission of a 1,4-alpha-linked oligosaccharide from growing alpha-1,4-glucan chains and the subsequent attachment of the oligosaccharide to the alpha-1,6 position. In Streptomyces avermitilis (strain ATCC 31267 / DSM 46492 / JCM 5070 / NBRC 14893 / NCIMB 12804 / NRRL 8165 / MA-4680), this protein is 1,4-alpha-glucan branching enzyme GlgB 2.